The primary structure comprises 315 residues: MPGLSCRFYQHKFPEVEDVVMVNVRSIAEMGAYVSLLEYNNIEGMILLSELSRRRIRSINKLIRIGRNERVVVIRVDKEKGYIDLSKRRVSPEEAIKCEDKFTKSKTVYSILRHVAEVLEYTKDEQLESLFQRTAWVFDDKYKRPGYGAYDAFKHAVSDPSILDSLDLNEDEREVLINNINRRLTPQAVKIRADIEVACYGYEGIDAVKEALRAGLNCSTENMPIKINLIAPPRYVMTTTTLERTEGLSVLSQAMAVIKEKIEEKRGVFNVQMEPKVVTDTDETELARQMERLERENAEVDGDDDAEEMEAKAED.

One can recognise an S1 motif domain in the interval 17–88; that stretch reads EDVVMVNVRS…EKGYIDLSKR (72 aa). Ser-49 bears the Phosphoserine; by HRI mark. At Ser-52 the chain carries Phosphoserine. Lys-141 is subject to N6-acetyllysine. Ser-158 bears the Phosphoserine mark. A phosphothreonine mark is found at Thr-279 and Thr-281. A disordered region spans residues 293-315; that stretch reads LERENAEVDGDDDAEEMEAKAED. Residues 299–308 show a composition bias toward acidic residues; that stretch reads EVDGDDDAEE.

It belongs to the eIF-2-alpha family. As to quaternary structure, eukaryotic translation initiation factor 2 eIF2 is a heterotrimeric complex composed of an alpha (EIF2S1), a beta (EIF2S2) and a gamma (EIF2S3) chain. eIF2 is member of the 43S pre-initiation complex (43S PIC). eIF2 forms a complex with at least CELF1/CUGBP1, CALR, CALR3, EIF2S1, EIF2S2, HSP90B1 and HSPA5. Interaction with METAP2 protects EIF2S1 from inhibitory phosphorylation. Interacts with ABCF1. Associates with ribosomes. Interacts with DDX3X in an RNA-independent manner. Post-translationally, phosphorylation at Ser-49 and Ser-52 stabilizes the eIF-2/GDP/eIF2B complex and prevents GDP/GTP exchange reaction, thus impairing the recycling of eIF-2 between successive rounds of initiation and leading to global inhibition of translation, while concomitantly initiating the preferential translation of integrated stress response (ISR)-specific mRNAs. Substrate for at least 4 kinases: EIF2AK1/HRI, EIF2AK2/PKR, EIF2AK3/PERK and EIF2AK4/GCN2. Phosphorylation on Ser-52 by the EIF2AK4/GCN2 protein kinase occurs in response to amino acid starvation and UV irradiation. Phosphorylation at Ser-52 by the EIF2AK3/PERK protein kinase occurs in response to the unfolded protein response. Phosphorylation at Ser-52 by EIF2AK1/HRI in response to mitochondrial damage promotes relocalization to the mitochondrial surface.

It localises to the cytoplasm. It is found in the stress granule. The protein localises to the cytosol. Its subcellular location is the mitochondrion. Its activity is regulated as follows. Activity is regulated by phosphorylation at Ser-49 and Ser-52, which stabilizes the eIF2/GDP/eIF2B complex and prevents the eIF2B-mediated exchange of GDP for GTP, thereby preventing the formation of the 43S pre-initiation complex (43S PIC). This results in the global attenuation of 5' cap-dependent protein synthesis and concomitant translation of ISR-specific mRNAs that contain a short upstream open reading frame (uORF) in their 5' UTR, such as ATF4, ATF5, DDIT3/CHOP and PPP1R15A/GADD34. Its function is as follows. Member of the eIF2 complex that functions in the early steps of protein synthesis by forming a ternary complex with GTP and initiator tRNA. This complex binds to a 40S ribosomal subunit, followed by mRNA binding to form a 43S pre-initiation complex. Junction of the 60S ribosomal subunit to form the 80S initiation complex is preceded by hydrolysis of the GTP bound to eIF2 and release of an eIF2-GDP binary complex. In order for eIF2 to recycle and catalyze another round of initiation, the GDP bound to eIF2 must exchange with GTP by way of a reaction catalyzed by eIF2B. EIF2S1/eIF2-alpha is a key component of the integrated stress response (ISR), required for adaptation to various stress: phosphorylation by metabolic-stress sensing protein kinases (EIF2AK1/HRI, EIF2AK2/PKR, EIF2AK3/PERK and EIF2AK4/GCN2) in response to stress converts EIF2S1/eIF2-alpha in a global protein synthesis inhibitor, leading to a attenuation of cap-dependent translation, while concomitantly initiating the preferential translation of ISR-specific mRNAs, such as the transcriptional activators ATF4 and QRICH1, and hence allowing ATF4- and QRICH1-mediated reprogramming. EIF2S1/eIF2-alpha also acts as an activator of mitophagy in response to mitochondrial damage: phosphorylation by EIF2AK1/HRI promotes relocalization to the mitochondrial surface, thereby triggering PRKN-independent mitophagy. The protein is Eukaryotic translation initiation factor 2 subunit 1 (EIF2S1) of Pongo abelii (Sumatran orangutan).